The sequence spans 216 residues: Outer-membrane lipoprotein LolB (216 aa).

Residues 1–21 (MLIFKICFYRLLPLSVLLLAA) form the signal peptide. The N-palmitoyl cysteine moiety is linked to residue C22. C22 carries S-diacylglycerol cysteine lipidation.

Belongs to the LolB family. In terms of assembly, monomer.

The protein resides in the cell outer membrane. Its function is as follows. Plays a critical role in the incorporation of lipoproteins in the outer membrane after they are released by the LolA protein. In Hamiltonella defensa subsp. Acyrthosiphon pisum (strain 5AT), this protein is Outer-membrane lipoprotein LolB.